Reading from the N-terminus, the 329-residue chain is UDP-2,3-diacylglucosamine pyrophosphatase LpxG (329 aa).

Residues Phe-2–Trp-24 form a helical membrane-spanning segment. 6 residues coordinate a divalent metal cation: Asp-59, His-61, Asp-91, Asn-123, His-257, and His-259.

Belongs to the metallophosphoesterase superfamily. LpxG family. Mn(2+) serves as cofactor.

The protein resides in the cell inner membrane. The catalysed reaction is UDP-2,3-diacyl-alpha-D-glucosamine + H2O = 2,3-diacyl-alpha-D-glucosaminyl 1-phosphate + UMP + 2 H(+). Its pathway is glycolipid biosynthesis; lipid IV(A) biosynthesis. Its function is as follows. Hydrolyzes the pyrophosphate bond of UDP-2,3-diacylglucosamine to form 2,3-diacylglucosamine 1-phosphate (lipid X) and UMP by catalyzing the attack of water at the alpha-P atom. Involved in the biosynthesis of lipid A, a phosphorylated glycolipid that anchors the lipooligosaccharide (LOS) to the outer membrane of the cell. Can functionally complement lpxH deficiency in E.coli. Overexpression of LpxG results in toxic accumulation of lipid X and profoundly reduces the infectivity of C.trachomatis. Can utilize UDP-2-N,3-O-bis((3R)-3-hydroxytetradecanoyl)-alpha-D-glucosamine as substrate in vitro, but the substrate is likely UDP-2-N-((3R)-3-hydroxyicosanoyl),3-O-(tetradecanoyl)-alpha-D-glucosamine in vivo. The sequence is that of UDP-2,3-diacylglucosamine pyrophosphatase LpxG from Chlamydia trachomatis serovar D (strain ATCC VR-885 / DSM 19411 / UW-3/Cx).